A 266-amino-acid polypeptide reads, in one-letter code: Hemin import ATP-binding protein HmuV (266 aa).

The 237-residue stretch at 12-248 folds into the ABC transporter domain; it reads LEANQLSYHV…ETLTRWYQAD (237 aa). Residue 44–51 participates in ATP binding; the sequence is GPNGAGKS.

It belongs to the ABC transporter superfamily. Heme (hemin) importer (TC 3.A.1.14.5) family. The complex is composed of two ATP-binding proteins (HmuV), two transmembrane proteins (HmuU) and a solute-binding protein (HmuT).

It is found in the cell inner membrane. In terms of biological role, part of the ABC transporter complex HmuTUV involved in hemin import. Responsible for energy coupling to the transport system. This is Hemin import ATP-binding protein HmuV from Yersinia enterocolitica.